The sequence spans 440 residues: VGFKAGVKDYRLNYYTPDYQTKETDILAAFRMTPQPGVPPEEAGAAVAAESSTGTWTTVWTDGLTSLDRYKGRCYDLEAVPGEENQYIAYVAYPLDLFEEGSVTNLFTSIVGNVFGFKALRALRLEDLRIPPAYSKTFQGPPHGIQVERDKLNKYGRPLLGCTIKPKLGLSAKNYGRAVYECLRGGLDFTKDDENVNSQPFMRWRDRFLFVAEALYKSQAETGEIKGHYLNATAGTCEEMLKRAEFARELGAPIVMHDYLTGGFTANTTLAHYCRDNGLLLHIHRAMHAVIDRQKNHGMHFRVLAKALRLSGGDHIHAGTVVGKLEGERQVTLGFVDLLRDDYIEKDRSRGIYFTQDWVSLPGVLPVASGGIHVWHXPALTEIFGDDSVLQFGGGTLGHPWGNAPGAVANRVALEACVQARNEGRDLAREGNEVIREATK.

Lys4 bears the N6,N6,N6-trimethyllysine mark. Substrate-binding residues include Asn113 and Thr163. Catalysis depends on Lys165, which acts as the Proton acceptor. Lys167 is a substrate binding site. Lys191, Asp193, and Glu194 together coordinate Mg(2+). Lys191 is modified (N6-carboxylysine). His284 (proton acceptor) is an active-site residue. Residues Arg285, His317, and Ser369 each contribute to the substrate site.

The protein belongs to the RuBisCO large chain family. Type I subfamily. In terms of assembly, heterohexadecamer of 8 large chains and 8 small chains; disulfide-linked. The disulfide link is formed within the large subunit homodimers. The cofactor is Mg(2+). Post-translationally, the disulfide bond which can form in the large chain dimeric partners within the hexadecamer appears to be associated with oxidative stress and protein turnover.

It localises to the plastid. It is found in the chloroplast. The enzyme catalyses 2 (2R)-3-phosphoglycerate + 2 H(+) = D-ribulose 1,5-bisphosphate + CO2 + H2O. The catalysed reaction is D-ribulose 1,5-bisphosphate + O2 = 2-phosphoglycolate + (2R)-3-phosphoglycerate + 2 H(+). Functionally, ruBisCO catalyzes two reactions: the carboxylation of D-ribulose 1,5-bisphosphate, the primary event in carbon dioxide fixation, as well as the oxidative fragmentation of the pentose substrate in the photorespiration process. Both reactions occur simultaneously and in competition at the same active site. The chain is Ribulose bisphosphate carboxylase large chain from Ptychomitrium gardneri (Gardner's ptychomitrium moss).